A 528-amino-acid polypeptide reads, in one-letter code: GTPase Obg (528 aa).

Residues 2-159 (ASFVDRVVLH…SDIVLELKSI (158 aa)) form the Obg domain. The OBG-type G domain maps to 160–343 (ADIALVGFPS…LGFAMAEIVQ (184 aa)). Residues 166 to 173 (GFPSAGKS), 191 to 195 (FTTLI), 212 to 215 (DVPG), 295 to 298 (NKVD), and 324 to 326 (SAT) contribute to the GTP site. Mg(2+)-binding residues include Ser-173 and Thr-193. The region spanning 363–447 (PRAVNESGFK…DDGVVFDWEP (85 aa)) is the OCT domain. A disordered region spans residues 471 to 490 (DRPTRSQKRDEQIERREAKA).

Belongs to the TRAFAC class OBG-HflX-like GTPase superfamily. OBG GTPase family. In terms of assembly, monomer. Mg(2+) serves as cofactor.

It is found in the cytoplasm. Its function is as follows. An essential GTPase which binds GTP, GDP and possibly (p)ppGpp with moderate affinity, with high nucleotide exchange rates and a fairly low GTP hydrolysis rate. Plays a role in control of the cell cycle, stress response, ribosome biogenesis and in those bacteria that undergo differentiation, in morphogenesis control. This Paenarthrobacter aurescens (strain TC1) protein is GTPase Obg.